The sequence spans 390 residues: O-glycoside alpha-1,2-mannosyltransferase omh1 (390 aa).

Glutamate 279 serves as the catalytic Nucleophile.

This sequence belongs to the glycosyltransferase 15 family.

The protein localises to the endoplasmic reticulum. It is found in the golgi apparatus. In terms of biological role, mannosyltransferase involved in O-glycosylation of cell wall and secreted proteins. Plays a major role in extending alpha-1,2-linked mannose in the O-glycan pathway. This chain is O-glycoside alpha-1,2-mannosyltransferase omh1 (omh1), found in Schizosaccharomyces pombe (strain 972 / ATCC 24843) (Fission yeast).